The primary structure comprises 353 residues: Photosystem II D2 protein (353 aa).

Thr2 is modified (N-acetylthreonine). Residue Thr2 is modified to Phosphothreonine. Residues Cys41 to Thr61 traverse the membrane as a helical segment. His118 is a binding site for chlorophyll a. A helical membrane pass occupies residues Gly125–Pro141. Pheophytin a is bound by residues Gln130 and Asn143. A helical transmembrane segment spans residues Val153 to Ser166. Position 198 (His198) interacts with chlorophyll a. The chain crosses the membrane as a helical span at residues Ala208–Asp228. A plastoquinone is bound by residues His215 and Phe262. Residue His215 participates in Fe cation binding. His269 is a binding site for Fe cation. A helical membrane pass occupies residues Gly279–Arg295.

This sequence belongs to the reaction center PufL/M/PsbA/D family. As to quaternary structure, PSII is composed of 1 copy each of membrane proteins PsbA, PsbB, PsbC, PsbD, PsbE, PsbF, PsbH, PsbI, PsbJ, PsbK, PsbL, PsbM, PsbT, PsbX, PsbY, PsbZ, Psb30/Ycf12, at least 3 peripheral proteins of the oxygen-evolving complex and a large number of cofactors. It forms dimeric complexes. The cofactor is The D1/D2 heterodimer binds P680, chlorophylls that are the primary electron donor of PSII, and subsequent electron acceptors. It shares a non-heme iron and each subunit binds pheophytin, quinone, additional chlorophylls, carotenoids and lipids. There is also a Cl(-1) ion associated with D1 and D2, which is required for oxygen evolution. The PSII complex binds additional chlorophylls, carotenoids and specific lipids..

Its subcellular location is the plastid. It is found in the chloroplast thylakoid membrane. The catalysed reaction is 2 a plastoquinone + 4 hnu + 2 H2O = 2 a plastoquinol + O2. Functionally, photosystem II (PSII) is a light-driven water:plastoquinone oxidoreductase that uses light energy to abstract electrons from H(2)O, generating O(2) and a proton gradient subsequently used for ATP formation. It consists of a core antenna complex that captures photons, and an electron transfer chain that converts photonic excitation into a charge separation. The D1/D2 (PsbA/PsbD) reaction center heterodimer binds P680, the primary electron donor of PSII as well as several subsequent electron acceptors. D2 is needed for assembly of a stable PSII complex. In Saccharum hybrid (Sugarcane), this protein is Photosystem II D2 protein.